The following is a 167-amino-acid chain: Zymogen granule membrane protein 16 (167 aa).

An N-terminal signal peptide occupies residues methionine 1–alanine 16. Residues serine 24 to threonine 159 enclose the Jacalin-type lectin domain.

Belongs to the jacalin lectin family. In terms of tissue distribution, expressed in pancreas, colon, duodenum, and much less in stomach.

The protein localises to the secreted. Its subcellular location is the extracellular space. The protein resides in the extracellular matrix. It is found in the zymogen granule lumen. It localises to the golgi apparatus lumen. May play a role in protein trafficking. May act as a linker molecule between the submembranous matrix on the luminal side of zymogen granule membrane (ZGM) and aggregated secretory proteins during granule formation in the TGN. The protein is Zymogen granule membrane protein 16 (Zg16) of Rattus norvegicus (Rat).